The following is a 456-amino-acid chain: MTMHDTPSGLNWDLGLAPPADGLWCGLRLVAELTQADQPLPADAPACLVVQGGMLRWVGPQAQLPAAFSALRRFDARDAARTGAHGAAPGAPGTLATPALVDCHTHLVYGGQRADEFALRLAGASYEALAQAGGGILASVQATRAASEDQLFALAMPRLQALLAEGVGAIEIKSGYGLALEHERKQLRVARRLGQACAVTVRTSFLGAHALPPEYAGRSQDYIDLVCQQMLPALAEQGLVDAVDMFCERIAFTLAETEQVFLAAQQLGLPVKLHAGQLSDMGGAALAARYGALSCDHLEHLSADAIAAMQAAGTVAVLLPGAWYTLRGQQRPPIEALRAAGVPMAVATDHNPGSSPALSLLLMAHMACTLFHLSLSEALAGITTHAARALGLQDSHGLIAAGRPANFVLWPLQEAAELVYWLGHKPACTIVRQGRVVRDGLGLLDRPEMPVLRDGA.

Positions 104 and 106 each coordinate Fe(3+). Zn(2+)-binding residues include His-104 and His-106. Residues Arg-113, Tyr-176, and His-209 each coordinate 4-imidazolone-5-propanoate. Tyr-176 is an N-formimidoyl-L-glutamate binding site. His-274 contacts Fe(3+). A Zn(2+)-binding site is contributed by His-274. Gln-277 is a 4-imidazolone-5-propanoate binding site. Residue Asp-349 participates in Fe(3+) binding. Asp-349 serves as a coordination point for Zn(2+). Residues Asn-351 and Gly-353 each contribute to the N-formimidoyl-L-glutamate site. Residue Ser-354 participates in 4-imidazolone-5-propanoate binding.

The protein belongs to the metallo-dependent hydrolases superfamily. HutI family. Zn(2+) is required as a cofactor. Requires Fe(3+) as cofactor.

It is found in the cytoplasm. It catalyses the reaction 4-imidazolone-5-propanoate + H2O = N-formimidoyl-L-glutamate. Its pathway is amino-acid degradation; L-histidine degradation into L-glutamate; N-formimidoyl-L-glutamate from L-histidine: step 3/3. Functionally, catalyzes the hydrolytic cleavage of the carbon-nitrogen bond in imidazolone-5-propanoate to yield N-formimidoyl-L-glutamate. It is the third step in the universal histidine degradation pathway. This is Imidazolonepropionase from Verminephrobacter eiseniae (strain EF01-2).